Here is a 1320-residue protein sequence, read N- to C-terminus: Bifunctional protein PutA (1320 aa).

The segment at 228-574 is proline dehydrogenase; it reads LSRSLNRIIG…SFVNRIADAT (347 aa). The aldehyde dehydrogenase stretch occupies residues 653–1119; it reads QPVADGEMTP…LAHRPPNALN (467 aa). Residues Glu883 and Cys917 contribute to the active site.

It in the N-terminal section; belongs to the proline dehydrogenase family. This sequence in the C-terminal section; belongs to the aldehyde dehydrogenase family. FAD serves as cofactor.

It catalyses the reaction L-proline + a quinone = (S)-1-pyrroline-5-carboxylate + a quinol + H(+). The catalysed reaction is L-glutamate 5-semialdehyde + NAD(+) + H2O = L-glutamate + NADH + 2 H(+). It functions in the pathway amino-acid degradation; L-proline degradation into L-glutamate; L-glutamate from L-proline: step 1/2. Its pathway is amino-acid degradation; L-proline degradation into L-glutamate; L-glutamate from L-proline: step 2/2. In terms of biological role, oxidizes proline to glutamate for use as a carbon and nitrogen source and also function as a transcriptional repressor of the put operon. The sequence is that of Bifunctional protein PutA (putA) from Salmonella typhimurium (strain LT2 / SGSC1412 / ATCC 700720).